Reading from the N-terminus, the 219-residue chain is MEHVVSAQLRSIVGNKRAVRRLRATGAIPAVAYGPGLEKPLSLVLNKTDFLKIFKHITESTPLTLVVKDENDKEVLKHLAFIKMVQYDKVTDEVKHVDFYVPEAHHKMRINVPIEIVGKAIGVEKGGIMEIIHHEVPVKALPDRVPEVIKIDVTNLELGETLRVKDVVLPEGVEIDMDDEDVLITVVVPRGLEVEETTTTETSNEPEVIKKGKKEEEEK.

The disordered stretch occupies residues 195–219 (EETTTTETSNEPEVIKKGKKEEEEK). Low complexity predominate over residues 197 to 206 (TTTTETSNEP). The segment covering 207-219 (EVIKKGKKEEEEK) has biased composition (basic and acidic residues).

The protein belongs to the bacterial ribosomal protein bL25 family. CTC subfamily. In terms of assembly, part of the 50S ribosomal subunit; part of the 5S rRNA/L5/L18/L25 subcomplex. Contacts the 5S rRNA. Binds to the 5S rRNA independently of L5 and L18.

Functionally, this is one of the proteins that binds to the 5S RNA in the ribosome where it forms part of the central protuberance. The chain is Large ribosomal subunit protein bL25 from Fervidobacterium nodosum (strain ATCC 35602 / DSM 5306 / Rt17-B1).